The following is a 173-amino-acid chain: MNKENKQELVAEMHDKLQRAQAVFLADFRGMNVGQATELRNELRKANAEYKVVKNTLLEIASKGTDKEGLNPYYAGPTAIALCYDDPVAAAKVLSRFNKENTNPFTLKAGVLTGKTINVADIQALADLPSREVLIAKMLGSMQAPASNFVRVLAAVPGGFVRALDAIRAQKEA.

This sequence belongs to the universal ribosomal protein uL10 family. In terms of assembly, part of the ribosomal stalk of the 50S ribosomal subunit. The N-terminus interacts with L11 and the large rRNA to form the base of the stalk. The C-terminus forms an elongated spine to which L12 dimers bind in a sequential fashion forming a multimeric L10(L12)X complex.

Forms part of the ribosomal stalk, playing a central role in the interaction of the ribosome with GTP-bound translation factors. This chain is Large ribosomal subunit protein uL10, found in Geobacter sp. (strain M21).